Consider the following 414-residue polypeptide: tRNA dimethylallyltransferase (414 aa).

33-40 (APTASGKT) lines the ATP pocket. A substrate-binding site is contributed by 35–40 (TASGKT). Interaction with substrate tRNA regions lie at residues 58-61 (DSAL), 182-186 (QRITR), and 266-271 (RCVGYR).

This sequence belongs to the IPP transferase family. As to quaternary structure, monomer. The cofactor is Mg(2+).

The catalysed reaction is adenosine(37) in tRNA + dimethylallyl diphosphate = N(6)-dimethylallyladenosine(37) in tRNA + diphosphate. Catalyzes the transfer of a dimethylallyl group onto the adenine at position 37 in tRNAs that read codons beginning with uridine, leading to the formation of N6-(dimethylallyl)adenosine (i(6)A). This Psychrobacter cryohalolentis (strain ATCC BAA-1226 / DSM 17306 / VKM B-2378 / K5) protein is tRNA dimethylallyltransferase.